A 480-amino-acid polypeptide reads, in one-letter code: Aspartyl/glutamyl-tRNA(Asn/Gln) amidotransferase subunit B (480 aa).

The protein belongs to the GatB/GatE family. GatB subfamily. Heterotrimer of A, B and C subunits.

It carries out the reaction L-glutamyl-tRNA(Gln) + L-glutamine + ATP + H2O = L-glutaminyl-tRNA(Gln) + L-glutamate + ADP + phosphate + H(+). The catalysed reaction is L-aspartyl-tRNA(Asn) + L-glutamine + ATP + H2O = L-asparaginyl-tRNA(Asn) + L-glutamate + ADP + phosphate + 2 H(+). In terms of biological role, allows the formation of correctly charged Asn-tRNA(Asn) or Gln-tRNA(Gln) through the transamidation of misacylated Asp-tRNA(Asn) or Glu-tRNA(Gln) in organisms which lack either or both of asparaginyl-tRNA or glutaminyl-tRNA synthetases. The reaction takes place in the presence of glutamine and ATP through an activated phospho-Asp-tRNA(Asn) or phospho-Glu-tRNA(Gln). This is Aspartyl/glutamyl-tRNA(Asn/Gln) amidotransferase subunit B from Streptococcus thermophilus (strain ATCC BAA-491 / LMD-9).